Consider the following 371-residue polypeptide: Cytochrome b (371 aa).

Helical transmembrane passes span 25-45, 69-90, 105-125, and 170-190; these read FGSM…FLAI, WIMQ…YIHI, WLSG…GYVL, and FFAL…IHII. His75 and His89 together coordinate heme b. Heme b is bound by residues His174 and His188. Position 193 (His193) interacts with a ubiquinone. The next 4 helical transmembrane spans lie at 218–238, 280–300, 312–332, and 339–358; these read YKDL…LSFS, LGGT…PFTH, LSQT…WTAT, and FITI…IMNP.

Belongs to the cytochrome b family. As to quaternary structure, the cytochrome bc1 complex contains 3 respiratory subunits (MT-CYB, CYC1 and UQCRFS1), 2 core proteins (UQCRC1 and UQCRC2) and probably 6 low-molecular weight proteins. It depends on heme b as a cofactor.

It localises to the mitochondrion inner membrane. Functionally, component of the ubiquinol-cytochrome c reductase complex (complex III or cytochrome b-c1 complex) that is part of the mitochondrial respiratory chain. The b-c1 complex mediates electron transfer from ubiquinol to cytochrome c. Contributes to the generation of a proton gradient across the mitochondrial membrane that is then used for ATP synthesis. The sequence is that of Cytochrome b (MT-CYB) from Micrurus fulvius (Eastern coral snake).